The primary structure comprises 285 residues: S-methyl-5'-thioadenosine phosphorylase (285 aa).

Phosphate-binding positions include Ser-10, 52–53, and 85–86; these read RH and TA. Met-188 serves as a coordination point for substrate. Thr-189 contributes to the phosphate binding site. 212–214 is a substrate binding site; it reads DYD.

This sequence belongs to the PNP/MTAP phosphorylase family. MTAP subfamily. As to quaternary structure, homotrimer.

It is found in the cytoplasm. It localises to the nucleus. The enzyme catalyses S-methyl-5'-thioadenosine + phosphate = 5-(methylsulfanyl)-alpha-D-ribose 1-phosphate + adenine. It participates in amino-acid biosynthesis; L-methionine biosynthesis via salvage pathway; S-methyl-5-thio-alpha-D-ribose 1-phosphate from S-methyl-5'-thioadenosine (phosphorylase route): step 1/1. Catalyzes the reversible phosphorylation of S-methyl-5'-thioadenosine (MTA) to adenine and 5-methylthioribose-1-phosphate. Involved in the breakdown of MTA, a major by-product of polyamine biosynthesis. Responsible for the first step in the methionine salvage pathway after MTA has been generated from S-adenosylmethionine. Has broad substrate specificity with 6-aminopurine nucleosides as preferred substrates. This is S-methyl-5'-thioadenosine phosphorylase from Caenorhabditis briggsae.